The primary structure comprises 438 residues: Serine hydroxymethyltransferase (438 aa).

(6S)-5,6,7,8-tetrahydrofolate contacts are provided by residues leucine 133 and glycine 137–leucine 139. Residue lysine 242 is modified to N6-(pyridoxal phosphate)lysine.

Belongs to the SHMT family. As to quaternary structure, homodimer. Pyridoxal 5'-phosphate is required as a cofactor.

The protein localises to the cytoplasm. The enzyme catalyses (6R)-5,10-methylene-5,6,7,8-tetrahydrofolate + glycine + H2O = (6S)-5,6,7,8-tetrahydrofolate + L-serine. It participates in one-carbon metabolism; tetrahydrofolate interconversion. Its pathway is amino-acid biosynthesis; glycine biosynthesis; glycine from L-serine: step 1/1. Catalyzes the reversible interconversion of serine and glycine with tetrahydrofolate (THF) serving as the one-carbon carrier. This reaction serves as the major source of one-carbon groups required for the biosynthesis of purines, thymidylate, methionine, and other important biomolecules. Also exhibits THF-independent aldolase activity toward beta-hydroxyamino acids, producing glycine and aldehydes, via a retro-aldol mechanism. The protein is Serine hydroxymethyltransferase of Brucella suis (strain ATCC 23445 / NCTC 10510).